Here is a 240-residue protein sequence, read N- to C-terminus: Biosynthetic peptidoglycan transglycosylase (240 aa).

Residues 15-35 (WMFYLGAVVAIAWLATQAFYF) traverse the membrane as a helical segment.

This sequence belongs to the glycosyltransferase 51 family.

It localises to the cell inner membrane. The enzyme catalyses [GlcNAc-(1-&gt;4)-Mur2Ac(oyl-L-Ala-gamma-D-Glu-L-Lys-D-Ala-D-Ala)](n)-di-trans,octa-cis-undecaprenyl diphosphate + beta-D-GlcNAc-(1-&gt;4)-Mur2Ac(oyl-L-Ala-gamma-D-Glu-L-Lys-D-Ala-D-Ala)-di-trans,octa-cis-undecaprenyl diphosphate = [GlcNAc-(1-&gt;4)-Mur2Ac(oyl-L-Ala-gamma-D-Glu-L-Lys-D-Ala-D-Ala)](n+1)-di-trans,octa-cis-undecaprenyl diphosphate + di-trans,octa-cis-undecaprenyl diphosphate + H(+). Its pathway is cell wall biogenesis; peptidoglycan biosynthesis. Its function is as follows. Peptidoglycan polymerase that catalyzes glycan chain elongation from lipid-linked precursors. This is Biosynthetic peptidoglycan transglycosylase from Paraburkholderia xenovorans (strain LB400).